Reading from the N-terminus, the 360-residue chain is tRNA N6-adenosine threonylcarbamoyltransferase (360 aa).

Fe cation is bound by residues histidine 115 and histidine 119. Residues 137 to 141 (LVSGG), aspartate 170, glycine 183, and asparagine 283 contribute to the substrate site. Aspartate 311 is a Fe cation binding site.

Belongs to the KAE1 / TsaD family. Requires Fe(2+) as cofactor.

Its subcellular location is the cytoplasm. It carries out the reaction L-threonylcarbamoyladenylate + adenosine(37) in tRNA = N(6)-L-threonylcarbamoyladenosine(37) in tRNA + AMP + H(+). Functionally, required for the formation of a threonylcarbamoyl group on adenosine at position 37 (t(6)A37) in tRNAs that read codons beginning with adenine. Is involved in the transfer of the threonylcarbamoyl moiety of threonylcarbamoyl-AMP (TC-AMP) to the N6 group of A37, together with TsaE and TsaB. TsaD likely plays a direct catalytic role in this reaction. This chain is tRNA N6-adenosine threonylcarbamoyltransferase, found in Rhizobium meliloti (strain 1021) (Ensifer meliloti).